A 322-amino-acid chain; its full sequence is Methionyl-tRNA formyltransferase (322 aa).

113–116 serves as a coordination point for (6S)-5,6,7,8-tetrahydrofolate; it reads SLLP.

The protein belongs to the Fmt family.

The enzyme catalyses L-methionyl-tRNA(fMet) + (6R)-10-formyltetrahydrofolate = N-formyl-L-methionyl-tRNA(fMet) + (6S)-5,6,7,8-tetrahydrofolate + H(+). Its function is as follows. Attaches a formyl group to the free amino group of methionyl-tRNA(fMet). The formyl group appears to play a dual role in the initiator identity of N-formylmethionyl-tRNA by promoting its recognition by IF2 and preventing the misappropriation of this tRNA by the elongation apparatus. The protein is Methionyl-tRNA formyltransferase of Blochmanniella pennsylvanica (strain BPEN).